Here is a 56-residue protein sequence, read N- to C-terminus: Large ribosomal subunit protein bL32 (56 aa).

Residues 1 to 16 (MAVQKSKKSRSMRGMR) are compositionally biased toward basic residues. Positions 1 to 22 (MAVQKSKKSRSMRGMRRSHDAL) are disordered.

The protein belongs to the bacterial ribosomal protein bL32 family.

This is Large ribosomal subunit protein bL32 from Aliivibrio salmonicida (strain LFI1238) (Vibrio salmonicida (strain LFI1238)).